We begin with the raw amino-acid sequence, 175 residues long: uncharacterized protein (175 aa).

Over residues 35 to 56 (LIENSNYDNNNINNNNNNNNTD) the composition is skewed to low complexity. Residues 35 to 70 (LIENSNYDNNNINNNNNNNNTDNDNDNNNDNEPFYN) form a disordered region. 2 helical membrane passes run 106–126 (ILSF…FFNY) and 132–152 (YFII…KSIF).

The protein resides in the membrane. This is an uncharacterized protein from Dictyostelium discoideum (Social amoeba).